An 86-amino-acid chain; its full sequence is Small ribosomal subunit protein uS15 (86 aa).

The protein belongs to the universal ribosomal protein uS15 family. As to quaternary structure, part of the 30S ribosomal subunit. Forms a bridge to the 50S subunit in the 70S ribosome, contacting the 23S rRNA.

Functionally, one of the primary rRNA binding proteins, it binds directly to 16S rRNA where it helps nucleate assembly of the platform of the 30S subunit by binding and bridging several RNA helices of the 16S rRNA. In terms of biological role, forms an intersubunit bridge (bridge B4) with the 23S rRNA of the 50S subunit in the ribosome. This is Small ribosomal subunit protein uS15 from Mycoplasma genitalium (strain ATCC 33530 / DSM 19775 / NCTC 10195 / G37) (Mycoplasmoides genitalium).